We begin with the raw amino-acid sequence, 306 residues long: Curved DNA-binding protein (306 aa).

In terms of domain architecture, J spans 5–69 (DYYAIMGVKP…QRRAEYDQMW (65 aa)).

The protein resides in the cytoplasm. The protein localises to the nucleoid. In terms of biological role, DNA-binding protein that preferentially recognizes a curved DNA sequence. It is probably a functional analog of DnaJ; displays overlapping activities with DnaJ, but functions under different conditions, probably acting as a molecular chaperone in an adaptive response to environmental stresses other than heat shock. Lacks autonomous chaperone activity; binds native substrates and targets them for recognition by DnaK. Its activity is inhibited by the binding of CbpM. The chain is Curved DNA-binding protein from Escherichia fergusonii (strain ATCC 35469 / DSM 13698 / CCUG 18766 / IAM 14443 / JCM 21226 / LMG 7866 / NBRC 102419 / NCTC 12128 / CDC 0568-73).